Consider the following 495-residue polypeptide: Membrane-bound lytic murein transglycosylase F (495 aa).

The first 29 residues, 1–29, serve as a signal peptide directing secretion; it reads MEIRKLSLSTIRSIITSLSVLVLVISASA. Residues 30–273 are non-LT domain; it reads TLVRSTPPNV…VTKHFFERHI (244 aa). Residues 274 to 495 form an LT domain region; that stretch reads DEVTTGEAMV…TAAQGENLSL (222 aa). Glu-320 is an active-site residue.

It in the N-terminal section; belongs to the bacterial solute-binding protein 3 family. In the C-terminal section; belongs to the transglycosylase Slt family.

It localises to the cell outer membrane. The catalysed reaction is Exolytic cleavage of the (1-&gt;4)-beta-glycosidic linkage between N-acetylmuramic acid (MurNAc) and N-acetylglucosamine (GlcNAc) residues in peptidoglycan, from either the reducing or the non-reducing ends of the peptidoglycan chains, with concomitant formation of a 1,6-anhydrobond in the MurNAc residue.. Its function is as follows. Murein-degrading enzyme that degrades murein glycan strands and insoluble, high-molecular weight murein sacculi, with the concomitant formation of a 1,6-anhydromuramoyl product. Lytic transglycosylases (LTs) play an integral role in the metabolism of the peptidoglycan (PG) sacculus. Their lytic action creates space within the PG sacculus to allow for its expansion as well as for the insertion of various structures such as secretion systems and flagella. In Cellvibrio japonicus (strain Ueda107) (Pseudomonas fluorescens subsp. cellulosa), this protein is Membrane-bound lytic murein transglycosylase F.